Here is a 249-residue protein sequence, read N- to C-terminus: Triosephosphate isomerase (249 aa).

9-11 (NWK) is a binding site for substrate. H95 serves as the catalytic Electrophile. E165 acts as the Proton acceptor in catalysis. Residues G171, S210, and 231–232 (GG) contribute to the substrate site.

This sequence belongs to the triosephosphate isomerase family. As to quaternary structure, homodimer.

It is found in the cytoplasm. The enzyme catalyses D-glyceraldehyde 3-phosphate = dihydroxyacetone phosphate. Its pathway is carbohydrate biosynthesis; gluconeogenesis. The protein operates within carbohydrate degradation; glycolysis; D-glyceraldehyde 3-phosphate from glycerone phosphate: step 1/1. Involved in the gluconeogenesis. Catalyzes stereospecifically the conversion of dihydroxyacetone phosphate (DHAP) to D-glyceraldehyde-3-phosphate (G3P). The sequence is that of Triosephosphate isomerase from Hyphomonas neptunium (strain ATCC 15444).